The sequence spans 426 residues: Putative FBD-associated F-box protein At5g53635 (426 aa).

The region spanning 1-45 (MISQLPDPLICHILSHLPIKDLVTTRVLSTRWRSLWLWLPCLELN) is the F-box domain. Residues 353 to 405 (MIQFGSSLVPECLLSSLEFVDIRIPFRGHLEVMKLVRYFLENSAILKKLSLDH) enclose the FBD domain.

This Arabidopsis thaliana (Mouse-ear cress) protein is Putative FBD-associated F-box protein At5g53635.